The primary structure comprises 346 residues: MIIYKQGITFLQKENNNTIHLNTMFFLSPAETHQRMAAENHSFVTKFILVGLTEKSELQLPLFLVFLGIYVVTVLGNLGMITLIGLSSHLHTPMYCFLSSLSFIDFCHSTVITPKMLVNFVTEKNIISYPECMTQLYFFLVFAIAECHMLAAMAYDGYVAICSPLLYSIIISNKACFSLILVVYVIGLICASAHIGCMFRVQFCKFDVINHYFCDLISILKLSCSSTYINELLILIFSGINILVPSLTILSSYIFIIASILRIRYTEGRSKAFSTCSSHISAVSVFFGSAAFMYLQPSSVSSMDQGKVSSVFYTIVVPMLNPLIYSLRNKDVHVALKKTLGKRTFL.

The Extracellular segment spans residues 1-60; that stretch reads MIIYKQGITFLQKENNNTIHLNTMFFLSPAETHQRMAAENHSFVTKFILVGLTEKSELQL. N-linked (GlcNAc...) asparagine glycosylation is found at asparagine 16 and asparagine 40. A helical membrane pass occupies residues 61-81; it reads PLFLVFLGIYVVTVLGNLGMI. Residues 82–89 lie on the Cytoplasmic side of the membrane; it reads TLIGLSSH. The chain crosses the membrane as a helical span at residues 90–110; it reads LHTPMYCFLSSLSFIDFCHST. The Extracellular portion of the chain corresponds to 111 to 134; the sequence is VITPKMLVNFVTEKNIISYPECMT. A disulfide bond links cysteine 132 and cysteine 214. A helical membrane pass occupies residues 135–155; the sequence is QLYFFLVFAIAECHMLAAMAY. The Cytoplasmic segment spans residues 156–174; it reads DGYVAICSPLLYSIIISNK. A helical membrane pass occupies residues 175–195; it reads ACFSLILVVYVIGLICASAHI. Residues 196-232 are Extracellular-facing; the sequence is GCMFRVQFCKFDVINHYFCDLISILKLSCSSTYINEL. A helical membrane pass occupies residues 233 to 252; sequence LILIFSGINILVPSLTILSS. The Cytoplasmic segment spans residues 253–272; the sequence is YIFIIASILRIRYTEGRSKA. A helical transmembrane segment spans residues 273-293; sequence FSTCSSHISAVSVFFGSAAFM. Residues 294–306 are Extracellular-facing; the sequence is YLQPSSVSSMDQG. A helical transmembrane segment spans residues 307–327; the sequence is KVSSVFYTIVVPMLNPLIYSL. Residues 328-346 lie on the Cytoplasmic side of the membrane; that stretch reads RNKDVHVALKKTLGKRTFL.

The protein belongs to the G-protein coupled receptor 1 family.

It is found in the cell membrane. Its function is as follows. Odorant receptor. The protein is Olfactory receptor 8G5 (OR8G5) of Homo sapiens (Human).